The primary structure comprises 133 residues: Basic phospholipase A2 beta-bungarotoxin A-AL2 chain (133 aa).

The first 5 residues, 1-5 (FLLGA), serve as a signal peptide directing secretion. Residues 6–13 (ANIPPHPL) constitute a propeptide that is removed on maturation. 6 cysteine pairs are disulfide-bonded: Cys-40-Cys-132, Cys-42-Cys-58, Cys-57-Cys-113, Cys-64-Cys-106, Cys-74-Cys-99, and Cys-92-Cys-104. Ca(2+) contacts are provided by Tyr-41, Gly-43, and Gly-45. His-61 is a catalytic residue. Asp-62 contacts Ca(2+). The active site involves Asp-107.

Belongs to the phospholipase A2 family. Group I subfamily. D49 sub-subfamily. In terms of assembly, heterodimer; disulfide-linked. The A chains have phospholipase A2 activity and the B chains show homology with the basic protease inhibitors. Requires Ca(2+) as cofactor. Expressed by the venom gland.

It is found in the secreted. It catalyses the reaction a 1,2-diacyl-sn-glycero-3-phosphocholine + H2O = a 1-acyl-sn-glycero-3-phosphocholine + a fatty acid + H(+). In terms of biological role, snake venom phospholipase A2 (PLA2) that inhibits neuromuscular transmission by blocking acetylcholine release from the nerve termini. PLA2 catalyzes the calcium-dependent hydrolysis of the 2-acyl groups in 3-sn-phosphoglycerides. The protein is Basic phospholipase A2 beta-bungarotoxin A-AL2 chain of Bungarus multicinctus (Many-banded krait).